The sequence spans 166 residues: Crossover junction endodeoxyribonuclease RuvC (166 aa).

Catalysis depends on residues Asp-11, Glu-70, and Asp-142. Residues Asp-11, Glu-70, and Asp-142 each contribute to the Mg(2+) site.

It belongs to the RuvC family. In terms of assembly, homodimer which binds Holliday junction (HJ) DNA. The HJ becomes 2-fold symmetrical on binding to RuvC with unstacked arms; it has a different conformation from HJ DNA in complex with RuvA. In the full resolvosome a probable DNA-RuvA(4)-RuvB(12)-RuvC(2) complex forms which resolves the HJ. It depends on Mg(2+) as a cofactor.

Its subcellular location is the cytoplasm. The enzyme catalyses Endonucleolytic cleavage at a junction such as a reciprocal single-stranded crossover between two homologous DNA duplexes (Holliday junction).. In terms of biological role, the RuvA-RuvB-RuvC complex processes Holliday junction (HJ) DNA during genetic recombination and DNA repair. Endonuclease that resolves HJ intermediates. Cleaves cruciform DNA by making single-stranded nicks across the HJ at symmetrical positions within the homologous arms, yielding a 5'-phosphate and a 3'-hydroxyl group; requires a central core of homology in the junction. The consensus cleavage sequence is 5'-(A/T)TT(C/G)-3'. Cleavage occurs on the 3'-side of the TT dinucleotide at the point of strand exchange. HJ branch migration catalyzed by RuvA-RuvB allows RuvC to scan DNA until it finds its consensus sequence, where it cleaves and resolves the cruciform DNA. The sequence is that of Crossover junction endodeoxyribonuclease RuvC from Nitratidesulfovibrio vulgaris (strain ATCC 29579 / DSM 644 / CCUG 34227 / NCIMB 8303 / VKM B-1760 / Hildenborough) (Desulfovibrio vulgaris).